A 377-amino-acid polypeptide reads, in one-letter code: MSWSFLTRLLEEINNHSTFVGKVWLTVLIIFRIVLTAVGGESIYYDEQSKFTCNTQQPGCENVCYDAFAPLSHVRFWVFQIILITTPSIMYLGFAMHRIARQPEMQIRRSEKTKSKKRAPIIHRGAMRDYEEAEDNQEEDPMICEEEEPEKDSEKGDKKKHDGRRRIKQDGLMKVYVLQLLFRSVFEVGFLMGQYILYGFEVIPFFVCSRKPCPHTVDCFVSRPTEKTIFLLIMYAVSALCLFLNLCELFHLGIGGIRDALRQKKKELQESRKKTPSAPPNYHSVLKKGRLPNGKPVFPGNGVSEGFELPTHELDRLRQHLKLAQEHLDLAFHLNPTGDNTHASRSSSPESNSIAAEQNRLNLAQEKGVGNREKSGL.

Topologically, residues 1–18 (MSWSFLTRLLEEINNHST) are cytoplasmic. The helical transmembrane segment at 19–39 (FVGKVWLTVLIIFRIVLTAVG) threads the bilayer. At 40–75 (GESIYYDEQSKFTCNTQQPGCENVCYDAFAPLSHVR) the chain is on the extracellular side. A helical transmembrane segment spans residues 76–96 (FWVFQIILITTPSIMYLGFAM). The Cytoplasmic portion of the chain corresponds to 97-174 (HRIARQPEMQ…RRIKQDGLMK (78 aa)). The segment at 129-163 (DYEEAEDNQEEDPMICEEEEPEKDSEKGDKKKHDG) is disordered. Positions 131–151 (EEAEDNQEEDPMICEEEEPEK) are enriched in acidic residues. Residues 175–197 (VYVLQLLFRSVFEVGFLMGQYIL) traverse the membrane as a helical segment. The Extracellular segment spans residues 198–228 (YGFEVIPFFVCSRKPCPHTVDCFVSRPTEKT). A helical transmembrane segment spans residues 229 to 249 (IFLLIMYAVSALCLFLNLCEL). At 250-377 (FHLGIGGIRD…GVGNREKSGL (128 aa)) the chain is on the cytoplasmic side. Disordered stretches follow at residues 265–294 (KKEL…LPNG) and 334–377 (LNPT…KSGL). A compositionally biased stretch (polar residues) spans 337 to 362 (TGDNTHASRSSSPESNSIAAEQNRLN).

It belongs to the connexin family. Gamma-type subfamily. A connexon is composed of a hexamer of connexins.

It is found in the cell membrane. The protein localises to the cell junction. Its subcellular location is the gap junction. One gap junction consists of a cluster of closely packed pairs of transmembrane channels, the connexons, through which materials of low MW diffuse from one cell to a neighboring cell. The protein is Gap junction gamma-1 protein (gjc1) of Xenopus tropicalis (Western clawed frog).